We begin with the raw amino-acid sequence, 555 residues long: Transmembrane protein 87B (555 aa).

A signal peptide spans 1 to 42; sequence MAAACRSEAGLLPSLLCRRPAGAQLLRVALCLLCWVPAAVDA. Residues 43–216 lie on the Lumenal side of the membrane; that stretch reads VPELGLWTRT…HGYISASDWP (174 aa). Asn68, Asn160, and Asn198 each carry an N-linked (GlcNAc...) asparagine glycan. Residues 217-237 traverse the membrane as a helical segment; the sequence is LMIFYMVMCIVYILYGVLWLL. Residues 238-248 lie on the Cytoplasmic side of the membrane; the sequence is WSACYWKDILR. Residues 249-269 form a helical membrane-spanning segment; that stretch reads IQFWIAAVIFLGMLEKAVFYS. Residues 270–300 lie on the Lumenal side of the membrane; that stretch reads EYQNINSTGLSTQGLLIFAELISAVKRTLAR. N-linked (GlcNAc...) asparagine glycosylation occurs at Asn275. A helical transmembrane segment spans residues 301–321; sequence LLVIIVSLGYGIVKPRLGTVM. Topologically, residues 322-323 are cytoplasmic; sequence HR. The chain crosses the membrane as a helical span at residues 324 to 344; sequence VIGLGLLYLIFAAIEGVMRVI. The Lumenal segment spans residues 345–351; it reads GGSKHLA. A helical membrane pass occupies residues 352 to 372; sequence VVLTDIVLAVIDSIFVWFIFI. The Cytoplasmic portion of the chain corresponds to 373–394; the sequence is SLAQTMKTLRLRKNTVKFSLYR. The helical transmembrane segment at 395-415 threads the bilayer; that stretch reads HFTNTLIFAVLASIVFMVWTT. Topologically, residues 416-429 are lumenal; the sequence is KTFRIAKCQSDWME. A helical transmembrane segment spans residues 430–450; sequence LWVDDAFWSFLFSVILIVIMF. The Cytoplasmic segment spans residues 451-555; the sequence is LWRPSANNQR…EKMFSSEKIM (105 aa). Phosphoserine is present on residues Ser470, Ser497, and Ser534.

Belongs to the LU7TM family. TMEM87 subfamily.

The protein localises to the golgi apparatus membrane. Functionally, may be involved in retrograde transport from endosomes to the trans-Golgi network (TGN). The chain is Transmembrane protein 87B from Mus musculus (Mouse).